Consider the following 240-residue polypeptide: DNA repair protein RecO (240 aa).

The protein belongs to the RecO family.

Its function is as follows. Involved in DNA repair and RecF pathway recombination. The protein is DNA repair protein RecO of Actinobacillus pleuropneumoniae serotype 3 (strain JL03).